The sequence spans 288 residues: Shikimate kinase (288 aa).

81-91 (PVASGLKSSSA) lines the ATP pocket.

This sequence belongs to the GHMP kinase family. Archaeal shikimate kinase subfamily.

It is found in the cytoplasm. The catalysed reaction is shikimate + ATP = 3-phosphoshikimate + ADP + H(+). It functions in the pathway metabolic intermediate biosynthesis; chorismate biosynthesis; chorismate from D-erythrose 4-phosphate and phosphoenolpyruvate: step 5/7. The chain is Shikimate kinase from Methanothrix thermoacetophila (strain DSM 6194 / JCM 14653 / NBRC 101360 / PT) (Methanosaeta thermophila).